The primary structure comprises 986 residues: Bifunctional glutamine synthetase adenylyltransferase/adenylyl-removing enzyme (986 aa).

The adenylyl removase stretch occupies residues 1–473; it reads MTSSAPGNAD…HYARLFEGDP (473 aa). An adenylyl transferase region spans residues 478–986; the sequence is SLPPVNYGAG…RRVFTALLER (509 aa).

This sequence belongs to the GlnE family. Requires Mg(2+) as cofactor.

The catalysed reaction is [glutamine synthetase]-O(4)-(5'-adenylyl)-L-tyrosine + phosphate = [glutamine synthetase]-L-tyrosine + ADP. It carries out the reaction [glutamine synthetase]-L-tyrosine + ATP = [glutamine synthetase]-O(4)-(5'-adenylyl)-L-tyrosine + diphosphate. Its function is as follows. Involved in the regulation of glutamine synthetase GlnA, a key enzyme in the process to assimilate ammonia. When cellular nitrogen levels are high, the C-terminal adenylyl transferase (AT) inactivates GlnA by covalent transfer of an adenylyl group from ATP to specific tyrosine residue of GlnA, thus reducing its activity. Conversely, when nitrogen levels are low, the N-terminal adenylyl removase (AR) activates GlnA by removing the adenylyl group by phosphorolysis, increasing its activity. The regulatory region of GlnE binds the signal transduction protein PII (GlnB) which indicates the nitrogen status of the cell. This Bradyrhizobium sp. (strain ORS 278) protein is Bifunctional glutamine synthetase adenylyltransferase/adenylyl-removing enzyme.